The primary structure comprises 299 residues: Protein tantalus (299 aa).

The disordered stretch occupies residues 16–100; it reads KDNRSPTTNS…RSSTFGARAG (85 aa). Polar residues predominate over residues 20–35; that stretch reads SPTTNSNLSWQLNQMA. The segment covering 53-69 has biased composition (acidic residues); the sequence is ESDDNVSSESHDSDDVD. Low complexity predominate over residues 84 to 93; the sequence is CISGSSRRSS. Ser204 and Ser264 each carry phosphoserine.

Binds to DNA in vitro. Interacts directly with Asx. In terms of tissue distribution, ubiquitously expressed in precellularized embryos. Then it decreases at cellular blastoderm to increase again during germ band extension. During germ band extension, it is highly expressed in somatic and visceral mesoderm. Ubiquitously expressed in imaginal disks. In ovary, it is expressed from stage 10.

It localises to the nucleus. The protein resides in the cytoplasm. The protein localises to the chromosome. Functionally, potential cofactor involved in sensory organ development. Despite its interaction with the Polycomb group protein Asx, it does not regulate the expression of homeotic genes. This Drosophila melanogaster (Fruit fly) protein is Protein tantalus.